The primary structure comprises 117 residues: MVMFSLIIVCASTLKNRVLFLGKKAASKYDAENCESLAQVNRAEVLRYSLVYASNGTGNRVDALFSSVKELETWKVELLMEIACICRKIASKTKIRDKEKTLMGSILILFTSINQRG.

This is an uncharacterized protein from Saccharomyces cerevisiae (strain ATCC 204508 / S288c) (Baker's yeast).